Reading from the N-terminus, the 318-residue chain is Sol locus transcriptional repressor (318 aa).

4 TPR repeats span residues 65–98, 99–132, 133–166, and 167–199; these read ANAY…RPKT, INDV…QPNV, GISY…GSTN, and SVYR…EPEK.

In terms of biological role, transcriptional repressor of the sol locus (adhE/aad, ctfA, ctfB and adc) genes for butanol and acetone formation. In Clostridium acetobutylicum (strain ATCC 824 / DSM 792 / JCM 1419 / IAM 19013 / LMG 5710 / NBRC 13948 / NRRL B-527 / VKM B-1787 / 2291 / W), this protein is Sol locus transcriptional repressor (solR).